The following is a 281-amino-acid chain: HTH-type transcriptional activator RamA (281 aa).

The HTH luxR-type domain maps to 213–278 (RIKQTTKLSA…EAVNAARRIG (66 aa)).

Functionally, ramA is a master regulator of acetate metabolism. It positively controls the expression of acnA, aceA, aceB, ack, pta and ramB genes in the presence of acetate. RamA is also a positive regulator of rpf2 gene expression during growth on glucose as the sole carbon source. The polypeptide is HTH-type transcriptional activator RamA (Corynebacterium glutamicum (strain ATCC 13032 / DSM 20300 / JCM 1318 / BCRC 11384 / CCUG 27702 / LMG 3730 / NBRC 12168 / NCIMB 10025 / NRRL B-2784 / 534)).